The chain runs to 67 residues: Small ribosomal subunit protein eS27 (67 aa).

Residues Cys-22, Cys-25, Cys-41, and Cys-44 each coordinate Zn(2+). The C4-type zinc finger occupies 22–44 (CPDCGNEQVTFSHAAMVVRCLVC).

The protein belongs to the eukaryotic ribosomal protein eS27 family. As to quaternary structure, part of the 30S ribosomal subunit. Zn(2+) serves as cofactor.

In Pyrobaculum calidifontis (strain DSM 21063 / JCM 11548 / VA1), this protein is Small ribosomal subunit protein eS27.